The primary structure comprises 436 residues: Two-pore potassium channel 3 (436 aa).

Over 1-148 (MANEGSDPLL…QKDPTETSRS (148 aa)) the chain is Cytoplasmic. The disordered stretch occupies residues 62–117 (SHFIDSMKQPSPSSSSTAVNNPFSDSSTLDPLLPPPPPQPEPWLSDQTSSHCQGHA). The span at 71-92 (PSPSSSSTAVNNPFSDSSTLDP) shows a compositional bias: low complexity. Residues 93 to 102 (LLPPPPPQPE) show a composition bias toward pro residues. The chain crosses the membrane as a helical span at residues 149-169 (VVRQAFALLVVYLSLGVLIYW). The segment at residues 185–204 (DGLYFCIVTMCTIGYGDITP) is an intramembrane region (pore-forming). A helical transmembrane segment spans residues 212-232 (FSIMFVLVGFGFIDILLSGMV). Residues 233 to 274 (SYVLDLQESYMLDSAKRRDEPEKRRSYIIDVKKGRMRIRLKV) are Cytoplasmic-facing. A helical transmembrane segment spans residues 275–295 (ALALGVVVLCIAVGVGIMHFI). The pore-forming intramembrane region spans 302–321 (DSFYLSVMSVTTVGYGDRAF). Residues 328-348 (LFAAIWLLVSTLAVARAFLYL) form a helical membrane-spanning segment. Topologically, residues 349–436 (AEARVDKRNR…LDLLEGGSGD (88 aa)) are cytoplasmic. EF-hand domains are found at residues 365 to 400 (LCETMSVSQFFAADIDNNGCVSKAEYVIYKLKEMEK) and 404 to 436 (KDILPISKQFDKLDRCSNGKITLLDLLEGGSGD). The Ca(2+) site is built by Asp-378, Asp-380, Asn-382, Cys-384, Glu-389, Asp-417, Asn-421, Lys-423, and Asp-428.

It belongs to the two pore domain potassium channel (TC 1.A.1.7) family. As to quaternary structure, homodimer. As to expression, expressed in roots, cotyledons, stems, hypocotyls, leaves and flowers. Detected in root tips and in mesophyll cells and guard cells of the leaves.

It localises to the vacuole membrane. The protein resides in the plastid. It is found in the chloroplast thylakoid membrane. Inhibited by barium, but not by tetraethylammonium. Functionally, two-pore potassium channel modulating the proton motive force (pmf) necessary to convert photochemical energy into physiological functions. Mediates the potassium efflux from the thylakoid lumen required for the regulation of the transmembrane electrical potential, the enhancement of the pH gradient for ATP synthesis, the regulation of electron flow, and pH-mediated photoprotective responses. Requires calcium for channel activity. This is Two-pore potassium channel 3 from Arabidopsis thaliana (Mouse-ear cress).